The chain runs to 248 residues: 3-deoxy-manno-octulosonate cytidylyltransferase (248 aa).

This sequence belongs to the KdsB family.

The protein resides in the cytoplasm. The enzyme catalyses 3-deoxy-alpha-D-manno-oct-2-ulosonate + CTP = CMP-3-deoxy-beta-D-manno-octulosonate + diphosphate. It functions in the pathway nucleotide-sugar biosynthesis; CMP-3-deoxy-D-manno-octulosonate biosynthesis; CMP-3-deoxy-D-manno-octulosonate from 3-deoxy-D-manno-octulosonate and CTP: step 1/1. Its pathway is bacterial outer membrane biogenesis; lipopolysaccharide biosynthesis. Functionally, activates KDO (a required 8-carbon sugar) for incorporation into bacterial lipopolysaccharide in Gram-negative bacteria. In Klebsiella pneumoniae subsp. pneumoniae (strain ATCC 700721 / MGH 78578), this protein is 3-deoxy-manno-octulosonate cytidylyltransferase.